A 110-amino-acid chain; its full sequence is Large ribosomal subunit protein uL22 (110 aa).

The protein belongs to the universal ribosomal protein uL22 family. Part of the 50S ribosomal subunit.

Its function is as follows. This protein binds specifically to 23S rRNA; its binding is stimulated by other ribosomal proteins, e.g. L4, L17, and L20. It is important during the early stages of 50S assembly. It makes multiple contacts with different domains of the 23S rRNA in the assembled 50S subunit and ribosome. Functionally, the globular domain of the protein is located near the polypeptide exit tunnel on the outside of the subunit, while an extended beta-hairpin is found that lines the wall of the exit tunnel in the center of the 70S ribosome. This is Large ribosomal subunit protein uL22 from Aliivibrio fischeri (strain MJ11) (Vibrio fischeri).